A 613-amino-acid polypeptide reads, in one-letter code: Dihydroxy-acid dehydratase (613 aa).

Asp81 provides a ligand contact to Mg(2+). Residue Cys122 participates in [2Fe-2S] cluster binding. Positions 123 and 124 each coordinate Mg(2+). Residue Lys124 is modified to N6-carboxylysine. Cys195 contributes to the [2Fe-2S] cluster binding site. Glu491 contributes to the Mg(2+) binding site. Ser517 acts as the Proton acceptor in catalysis.

This sequence belongs to the IlvD/Edd family. As to quaternary structure, homodimer. The cofactor is [2Fe-2S] cluster. Requires Mg(2+) as cofactor.

The catalysed reaction is (2R)-2,3-dihydroxy-3-methylbutanoate = 3-methyl-2-oxobutanoate + H2O. The enzyme catalyses (2R,3R)-2,3-dihydroxy-3-methylpentanoate = (S)-3-methyl-2-oxopentanoate + H2O. Its pathway is amino-acid biosynthesis; L-isoleucine biosynthesis; L-isoleucine from 2-oxobutanoate: step 3/4. It participates in amino-acid biosynthesis; L-valine biosynthesis; L-valine from pyruvate: step 3/4. In terms of biological role, functions in the biosynthesis of branched-chain amino acids. Catalyzes the dehydration of (2R,3R)-2,3-dihydroxy-3-methylpentanoate (2,3-dihydroxy-3-methylvalerate) into 2-oxo-3-methylpentanoate (2-oxo-3-methylvalerate) and of (2R)-2,3-dihydroxy-3-methylbutanoate (2,3-dihydroxyisovalerate) into 2-oxo-3-methylbutanoate (2-oxoisovalerate), the penultimate precursor to L-isoleucine and L-valine, respectively. This Vibrio vulnificus (strain YJ016) protein is Dihydroxy-acid dehydratase.